Reading from the N-terminus, the 270-residue chain is tRNA pseudouridine synthase A (270 aa).

D51 serves as the catalytic Nucleophile. Y109 is a binding site for substrate.

This sequence belongs to the tRNA pseudouridine synthase TruA family. As to quaternary structure, homodimer.

It carries out the reaction uridine(38/39/40) in tRNA = pseudouridine(38/39/40) in tRNA. Functionally, formation of pseudouridine at positions 38, 39 and 40 in the anticodon stem and loop of transfer RNAs. The polypeptide is tRNA pseudouridine synthase A (Burkholderia multivorans (strain ATCC 17616 / 249)).